The sequence spans 179 residues: Large ribosomal subunit protein uL5 (179 aa).

This sequence belongs to the universal ribosomal protein uL5 family. As to quaternary structure, part of the 50S ribosomal subunit; part of the 5S rRNA/L5/L18/L25 subcomplex. Contacts the 5S rRNA and the P site tRNA. Forms a bridge to the 30S subunit in the 70S ribosome.

This is one of the proteins that bind and probably mediate the attachment of the 5S RNA into the large ribosomal subunit, where it forms part of the central protuberance. In the 70S ribosome it contacts protein S13 of the 30S subunit (bridge B1b), connecting the 2 subunits; this bridge is implicated in subunit movement. Contacts the P site tRNA; the 5S rRNA and some of its associated proteins might help stabilize positioning of ribosome-bound tRNAs. The sequence is that of Large ribosomal subunit protein uL5 from Paraburkholderia phymatum (strain DSM 17167 / CIP 108236 / LMG 21445 / STM815) (Burkholderia phymatum).